We begin with the raw amino-acid sequence, 402 residues long: APO protein 3, mitochondrial (402 aa).

The transit peptide at 1–13 (MQRRKLVEISIFV) directs the protein to the mitochondrion. A disordered region spans residues 37 to 59 (NDEDPLYADVPKPPKDKSERKPY). Positions 48–58 (KPPKDKSERKP) are enriched in basic and acidic residues. 2 consecutive APO domains span residues 127–213 (RCRL…DLEK) and 294–380 (TCGY…PVPD).

The protein belongs to the APO family.

The protein localises to the mitochondrion. May be involved in the stable assembly of several 4Fe-4S cluster-containing complexes of mitochondria. The chain is APO protein 3, mitochondrial (APO3) from Arabidopsis thaliana (Mouse-ear cress).